The chain runs to 507 residues: Prolyl carboxy peptidase like protein 5 (507 aa).

The N-terminal stretch at 1-16 (MNIFISLAILIATTHC) is a signal peptide. Residue asparagine 125 is glycosylated (N-linked (GlcNAc...) asparagine). Catalysis depends on serine 172, which acts as the Charge relay system. 2 N-linked (GlcNAc...) asparagine glycosylation sites follow: asparagine 332 and asparagine 407. Catalysis depends on charge relay system residues aspartate 439 and histidine 466.

This sequence belongs to the peptidase S28 family.

This Caenorhabditis elegans protein is Prolyl carboxy peptidase like protein 5.